The chain runs to 471 residues: Cytidine and dCMP deaminase domain-containing protein 1 (471 aa).

Residues M1–N27 are disordered. CMP/dCMP-type deaminase domains lie at L57–E153 and G312–G460. Residues H99, C124, C127, and H393 each coordinate Zn(2+). E395 serves as the catalytic Proton donor. Residues C421 and C424 each contribute to the Zn(2+) site.

This sequence belongs to the cytidine and deoxycytidylate deaminase family. Requires Zn(2+) as cofactor.

It carries out the reaction 2'-deoxycytidine + H2O + H(+) = 2'-deoxyuridine + NH4(+). The catalysed reaction is cytidine + H2O + H(+) = uridine + NH4(+). Functionally, catalyzes the deamination of cytidine and deoxycytidine into uridine and deoxyuridine, respectively. In Danio rerio (Zebrafish), this protein is Cytidine and dCMP deaminase domain-containing protein 1 (cdadc1).